A 634-amino-acid chain; its full sequence is DNA-directed RNA polymerase subunit gamma (634 aa).

4 residues coordinate Zn(2+): Cys-74, Cys-76, Cys-89, and Cys-92. 3 residues coordinate Mg(2+): Asp-471, Asp-473, and Asp-475.

This sequence belongs to the RNA polymerase beta' chain family. RpoC1 subfamily. In terms of assembly, in cyanobacteria the RNAP catalytic core is composed of 2 alpha, 1 beta, 1 beta', 1 gamma and 1 omega subunit. When a sigma factor is associated with the core the holoenzyme is formed, which can initiate transcription. Mg(2+) is required as a cofactor. The cofactor is Zn(2+).

It carries out the reaction RNA(n) + a ribonucleoside 5'-triphosphate = RNA(n+1) + diphosphate. In terms of biological role, DNA-dependent RNA polymerase catalyzes the transcription of DNA into RNA using the four ribonucleoside triphosphates as substrates. In Parasynechococcus marenigrum (strain WH8102), this protein is DNA-directed RNA polymerase subunit gamma.